The following is a 39-amino-acid chain: uncharacterized protein (39 aa).

Positions 1–21 (MHLRSRWWLALLYCKDPVSRS) are cleaved as a signal peptide.

This is an uncharacterized protein from Saccharomyces cerevisiae (strain ATCC 204508 / S288c) (Baker's yeast).